Reading from the N-terminus, the 258-residue chain is UPF0246 protein MS0374 (258 aa).

It belongs to the UPF0246 family.

The sequence is that of UPF0246 protein MS0374 from Mannheimia succiniciproducens (strain KCTC 0769BP / MBEL55E).